Consider the following 158-residue polypeptide: Siroheme decarboxylase beta subunit (158 aa).

The protein belongs to the Ahb/Nir family. Forms a heterodimer composed of AhbA and AhbB.

The catalysed reaction is siroheme + 2 H(+) = 12,18-didecarboxysiroheme + 2 CO2. It participates in porphyrin-containing compound metabolism; protoheme biosynthesis. Its function is as follows. Involved in siroheme-dependent heme b biosynthesis. Catalyzes the decarboxylation of siroheme into didecarboxysiroheme. This chain is Siroheme decarboxylase beta subunit, found in Oleidesulfovibrio alaskensis (strain ATCC BAA-1058 / DSM 17464 / G20) (Desulfovibrio alaskensis).